The primary structure comprises 595 residues: Aspartate--tRNA ligase (595 aa).

Glu173 provides a ligand contact to L-aspartate. The aspartate stretch occupies residues 197–200; that stretch reads QLFK. Arg219 serves as a coordination point for L-aspartate. Residues 219–221 and Gln228 contribute to the ATP site; that span reads RDE. Residue His449 coordinates L-aspartate. Glu483 is an ATP binding site. L-aspartate is bound at residue Arg490. Residue 535–538 participates in ATP binding; sequence GLDR.

This sequence belongs to the class-II aminoacyl-tRNA synthetase family. Type 1 subfamily. In terms of assembly, homodimer.

The protein localises to the cytoplasm. The catalysed reaction is tRNA(Asp) + L-aspartate + ATP = L-aspartyl-tRNA(Asp) + AMP + diphosphate. Catalyzes the attachment of L-aspartate to tRNA(Asp) in a two-step reaction: L-aspartate is first activated by ATP to form Asp-AMP and then transferred to the acceptor end of tRNA(Asp). The chain is Aspartate--tRNA ligase from Shewanella sediminis (strain HAW-EB3).